The sequence spans 376 residues: MPSLISQQWQERTSGFFSSSGTKLREAGQTAGSFVGEVAKDAKVNVADVAERVGSLFKSRWAILQQPATRHAVQEHLITAAATTGTFVRKGITETKEKVSVGKIKVEEAAKKTAQKSKTILTDIERWQKGVASSDVFGVAIEITVQRQESSRPIPLILVKCADYLILTGLNSPNLFKAEGDRKLIQQLVSAYNQDPRASIPEGVNPVDVAALLKYYLASLPTPLTTFELYNEIKDARSSIHRMRQSLQKLSNVNYNTLEFITALLLRVSQKSLLNKMDSHSLAMEMAPVIMWREDNRPESYREYWRRPSRSPKKSNDFETATPWDLLSDEGEGPDASSSIPLDDIARVDFGAVEVVQCLIEHHNAIFTDAAETVWR.

A Phosphoserine modification is found at Ser59. Residues 139–367 (VAIEITVQRQ…CLIEHHNAIF (229 aa)) enclose the Rho-GAP domain. The interval 307–338 (RPSRSPKKSNDFETATPWDLLSDEGEGPDASS) is disordered.

This is an uncharacterized protein from Arabidopsis thaliana (Mouse-ear cress).